The chain runs to 340 residues: Organic solute transporter subunit alpha (340 aa).

Topologically, residues 1 to 48 (MEPGRTHIKLDPRYTAELLELLETNYSISPACFSHPPTAAQLLRALGP) are extracellular. The N-linked (GlcNAc...) asparagine glycan is linked to Asn-25. Residues 49-69 (VDIALTIILTFLTTGSVAIFL) traverse the membrane as a helical segment. Residues 70–87 (EDAVYLYKNTLCPIKKRT) are Cytoplasmic-facing. A helical transmembrane segment spans residues 88–108 (LIWSSSAPTVVSVFCCFGLWI). Residues 109–114 (PRALTL) are Extracellular-facing. A helical membrane pass occupies residues 115–135 (VEMAITSFYAVCFYLLMMVMV). Topologically, residues 136–181 (EGFGGKKAVLRTLKDTPMRVHTGPCCCCCPCCPPLILTRKKLQLLL) are cytoplasmic. Residues 182–202 (LGPFQYAFFKITLSIVGLFLI) form a helical membrane-spanning segment. The Extracellular segment spans residues 203–219 (PDGIYDPGEISEKSAAL). The chain crosses the membrane as a helical span at residues 220-240 (WINNLLAVSTLLALWSLAILF). Over 241–255 (RQAKMHLGEQNMGSK) the chain is Cytoplasmic. A helical membrane pass occupies residues 256 to 276 (FALFQVLVILTALQPAIFSIL). Residues 277–297 (ANSGQIACSPPYSSKIRSQVM) lie on the Extracellular side of the membrane. A helical membrane pass occupies residues 298–317 (NCHMLILETFLMTVLTRMYY). Over 318–340 (RRKDDKVGYEACSLPDLDSALKA) the chain is Cytoplasmic. The residue at position 330 (Ser-330) is a Phosphoserine.

The protein belongs to the OST-alpha family. In terms of assembly, interacts with SLC51B. The Ost-alpha/Ost-beta complex is a heterodimer composed of alpha (SLC51A) and beta (SLC51B) subunit. N-glycosylated. Present at high levels in ileum. In ileum, it is restricted to the apical domain on the mature villus enterocytes with little detectable expression in the goblet cells or crypt enterocytes (at protein level). Expressed in kidney but not in heart, brain, liver, spleen, embryo, lung, thymus, ovary nor testis.

Its subcellular location is the cell membrane. The protein resides in the endoplasmic reticulum membrane. The catalysed reaction is taurocholate(out) = taurocholate(in). It catalyses the reaction tauroursodeoxycholate(out) = tauroursodeoxycholate(in). The enzyme catalyses glycoursodeoxycholate(out) = glycoursodeoxycholate(in). It carries out the reaction glycocholate(out) = glycocholate(in). The catalysed reaction is taurochenodeoxycholate(out) = taurochenodeoxycholate(in). It catalyses the reaction glycochenodeoxycholate(out) = glycochenodeoxycholate(in). The enzyme catalyses taurodeoxycholate(out) = taurodeoxycholate(in). It carries out the reaction glycodeoxycholate(out) = glycodeoxycholate(in). The catalysed reaction is prostaglandin E2(out) = prostaglandin E2(in). It catalyses the reaction estrone 3-sulfate(out) = estrone 3-sulfate(in). The enzyme catalyses dehydroepiandrosterone 3-sulfate(out) = dehydroepiandrosterone 3-sulfate(in). In terms of biological role, essential component of the Ost-alpha/Ost-beta complex, a heterodimer that acts as the intestinal basolateral transporter responsible for bile acid export from enterocytes into portal blood. Efficiently transports the major species of bile acids (taurocholate). Taurine conjugates are transported more efficiently across the basolateral membrane than glycine-conjugated bile acids. Can also transport steroids such as estrone 3-sulfate and dehydroepiandrosterone 3-sulfate, therefore playing a role in the enterohepatic circulation of sterols. Able to transport eicosanoids such as prostaglandin E2. In Mus musculus (Mouse), this protein is Organic solute transporter subunit alpha (Slc51a).